Here is a 274-residue protein sequence, read N- to C-terminus: Penicillin-insensitive murein endopeptidase (274 aa).

The first 19 residues, 1–19 (MKKTALALLALLVSSASLA), serve as a signal peptide directing secretion. Disulfide bonds link Cys-44-Cys-265, Cys-187-Cys-235, and Cys-216-Cys-223. Positions 110, 113, 120, 147, 150, and 211 each coordinate Zn(2+). A disordered region spans residues 225-274 (DQPLPPPGDGCGAELQSWFEPPEPGTTKPEKKTPPPLPPSCQALLDEHVL).

This sequence belongs to the peptidase M74 family. Dimer. The cofactor is Zn(2+).

It is found in the periplasm. Its function is as follows. Murein endopeptidase that cleaves the D-alanyl-meso-2,6-diamino-pimelyl amide bond that connects peptidoglycan strands. Likely plays a role in the removal of murein from the sacculus. The protein is Penicillin-insensitive murein endopeptidase of Citrobacter koseri (strain ATCC BAA-895 / CDC 4225-83 / SGSC4696).